Here is a 413-residue protein sequence, read N- to C-terminus: Multifunctional CCA protein (413 aa).

Positions 8 and 11 each coordinate ATP. Residues Gly8 and Arg11 each coordinate CTP. The Mg(2+) site is built by Asp21 and Asp23. Arg91, Arg143, and Arg146 together coordinate ATP. The CTP site is built by Arg91, Arg143, and Arg146. Residues 232–333 (TGVHVMMVID…VRLLERADAL (102 aa)) form the HD domain.

The protein belongs to the tRNA nucleotidyltransferase/poly(A) polymerase family. Bacterial CCA-adding enzyme type 1 subfamily. As to quaternary structure, monomer. Can also form homodimers and oligomers. The cofactor is Mg(2+). Ni(2+) is required as a cofactor.

The enzyme catalyses a tRNA precursor + 2 CTP + ATP = a tRNA with a 3' CCA end + 3 diphosphate. The catalysed reaction is a tRNA with a 3' CCA end + 2 CTP + ATP = a tRNA with a 3' CCACCA end + 3 diphosphate. Catalyzes the addition and repair of the essential 3'-terminal CCA sequence in tRNAs without using a nucleic acid template. Adds these three nucleotides in the order of C, C, and A to the tRNA nucleotide-73, using CTP and ATP as substrates and producing inorganic pyrophosphate. tRNA 3'-terminal CCA addition is required both for tRNA processing and repair. Also involved in tRNA surveillance by mediating tandem CCA addition to generate a CCACCA at the 3' terminus of unstable tRNAs. While stable tRNAs receive only 3'-terminal CCA, unstable tRNAs are marked with CCACCA and rapidly degraded. The protein is Multifunctional CCA protein of Burkholderia pseudomallei (strain K96243).